The following is a 132-amino-acid chain: Transthyretin-like protein 16 (132 aa).

An N-terminal signal peptide occupies residues 1–19 (MRSLVVCLLLAACALECTA). The N-linked (GlcNAc...) asparagine glycan is linked to N23.

This sequence belongs to the nematode transthyretin-like family.

It is found in the secreted. This is Transthyretin-like protein 16 (ttr-16) from Caenorhabditis elegans.